A 312-amino-acid polypeptide reads, in one-letter code: Isoflavone reductase homolog (312 aa).

NADP(+) is bound by residues 10-16 (GGTGYVG), Arg35, and Lys44. Lys138 (proton acceptor) is an active-site residue. Arg142 lines the NADP(+) pocket. His270 is a substrate binding site.

The protein belongs to the NmrA-type oxidoreductase family. Isoflavone reductase subfamily.

In Lupinus albus (White lupine), this protein is Isoflavone reductase homolog.